The chain runs to 588 residues: MYRWLAKVLGTILRLCERPAPGARALLKRRRSSSTLFSTAVDTDEIPAKRPRLDCFIHQVKNSLYNAASLFGFPFQLTTKPMVSSACNGTRNVAPSGEVFSNSSSCELMSSGSCSSMLKLGNKSPNGISDYPKIRVTVTRDQPRRVLPSFGFTLKSEGYNRRPSGRRHSKSNPESSLTWKPQEQGVTEMISEEGGKGVRRPHCTVEEGVQKDEREKYRKLLERLKEGAHGSTFPPTVSHHSSQRIQMDTLKTKGWVEEQNHGVRTTHFVPKQYRVVETRGPLCSMRSEKRYSKGKADTEKVVGLRFEKEGTRGHQMEPDLSEEVSARLRLGSGSNGLLRRKISVLEIKEKNFPSKEKDRRTEDLFEFTEDMEKEISNALGHGPPDEILSSAFKLRITRGDIQTLKNYHWLNDEVINFYMNLLVERSKKQGYPALHAFSTFFYPKLKSGGYQAVKRWTKGVNLFEQELVLVPIHRKVHWSLVVMDLRKKCLKYLDSMGQKGHRICEILLQYLQDESKTKRNTDLNLLEWTHYSMKPHEIPQQLNGSDCGMFTCKYADYISRDKPITFTQHQMPLFRKKMVWEILHQQLL.

Residues 28–31 (KRRR) carry the Nuclear localization signal motif. Residue S32 is modified to Phosphoserine. Residues 47 to 52 (PAKRPR) carry the Nuclear localization signal motif. Residues 157–184 (EGYNRRPSGRRHSKSNPESSLTWKPQEQ) are disordered. A compositionally biased stretch (polar residues) spans 172–184 (NPESSLTWKPQEQ). Residues 316–331 (MEPDLSEEVSARLRLG) carry the Nuclear export signal motif. A phosphoserine mark is found at S332 and S343. The tract at residues 394-558 (LRITRGDIQT…MFTCKYADYI (165 aa)) is protease. Residues H477 and D494 contribute to the active site. C547 acts as the Nucleophile in catalysis.

The protein belongs to the peptidase C48 family. As to quaternary structure, binds to SUMO2 and SUMO3. Interacts with the C-terminal domain of NUP153 via its N-terminus. Interacts with MTA1. In terms of processing, polyubiquitinated; which leads to proteasomal degradation. As to expression, highly expressed in testis. Detected in brain, heart and thymus.

It is found in the nucleus. The protein localises to the nuclear pore complex. It localises to the nucleus membrane. Its subcellular location is the cytoplasm. The protein resides in the cytoplasmic vesicle. It is found in the PML body. Protease that catalyzes two essential functions in the SUMO pathway. The first is the hydrolysis of an alpha-linked peptide bond at the C-terminal end of the small ubiquitin-like modifier (SUMO) propeptides, SUMO1, SUMO2 and SUMO3 leading to the mature form of the proteins. The second is the deconjugation of SUMO1, SUMO2 and SUMO3 from targeted proteins, by cleaving an epsilon-linked peptide bond between the C-terminal glycine of the mature SUMO and the lysine epsilon-amino group of the target protein. May down-regulate CTNNB1 levels and thereby modulate the Wnt pathway. Deconjugates SUMO2 from MTA1. Plays a dynamic role in adipogenesis by desumoylating and promoting the stabilization of CEBPB. Acts as a regulator of the cGAS-STING pathway by catalyzing desumoylation of CGAS and STING1 during the late phase of viral infection. In terms of biological role, activates transcription. The sequence is that of Sentrin-specific protease 2 (Senp2) from Mus musculus (Mouse).